The following is an 830-amino-acid chain: Adhesion G protein-coupled receptor E2 (830 aa).

The signal sequence occupies residues 1–22; the sequence is MRHGHPRLLPGLLMLLLLPLGA. The Extracellular portion of the chain corresponds to 23–540; the sequence is AAQKTSGCAR…MAHYDVQEED (518 aa). One can recognise an EGF-like 1 domain in the interval 26–68; the sequence is KTSGCARWCPPKSTCVNATTCRCSPGFSSLSGEIFSSPLESCD. 5 disulfides stabilise this stretch: Cys-30-Cys-40, Cys-34-Cys-46, Cys-48-Cys-67, Cys-73-Cys-87, and Cys-81-Cys-96. N-linked (GlcNAc...) asparagine glycosylation is present at Asn-42. In terms of domain architecture, EGF-like 1; calcium-binding spans 69–108; it reads DIDECGPPPLVSCGRLADCQNTEGSYHCMCSPGYALASGA. Residue Asn-113 is glycosylated (N-linked (GlcNAc...) asparagine). An EGF-like 2; calcium-binding domain is found at 121–159; it reads DVDECQLKPRVCKSRGICTNTKGSYTCKCPPGFELNLGD. Disulfide bonds link Cys-125–Cys-138, Cys-132–Cys-147, Cys-169–Cys-182, Cys-176–Cys-191, Cys-218–Cys-231, and Cys-225–Cys-240. The EGF-like 3; calcium-binding domain occupies 165 to 203; the sequence is DVNECTSGQNPCHNSTHCLNNIGGYECRCRPGWKPVPGS. A glycan (N-linked (GlcNAc...) asparagine) is linked at Asn-178. The region spanning 214-253 is the EGF-like 4; calcium-binding domain; sequence DVDECSSGKHTCHYSTVCINTVGSYKCRCRRGWKPKPRFQ. 4 N-linked (GlcNAc...) asparagine glycosylation sites follow: Asn-258, Asn-348, Asn-361, and Asn-379. A GAIN-B domain is found at 358-537; the sequence is WTFNASAGTD…AVLMAHYDVQ (180 aa). Cystine bridges form between Cys-489-Cys-519 and Cys-507-Cys-521. The interval 489–537 is GPS; sequence CVFWEHSQDECGHWSTRGCTVVDSGDTSTTCQCTHLSSFAVLMAHYDVQ. Residues 541–561 form a helical membrane-spanning segment; that stretch reads LVLPVITYVGLGLSLLCLLLA. The Cytoplasmic portion of the chain corresponds to 562–576; that stretch reads ALTFLLCKAIQNTST. The chain crosses the membrane as a helical span at residues 577 to 597; sequence SLHLQLLICLFLAHLLFLMAI. Residues 598–603 lie on the Extracellular side of the membrane; that stretch reads DRTEIK. The chain crosses the membrane as a helical span at residues 604-624; the sequence is VLCSIIAGALHYLYLASFTWM. Residues 625 to 651 are Cytoplasmic-facing; sequence LLEGLHLFLTARNLMVVNYSSVSMLMK. Residues 652–672 traverse the membrane as a helical segment; it reads KLMYPVGYGVPTLIVAISAAS. Residues 673–690 lie on the Extracellular side of the membrane; that stretch reads RSHLYGTRTRCWLNPEER. A helical membrane pass occupies residues 691 to 711; it reads FIWSFLGPVCTIFSVNLGFFL. The Cytoplasmic segment spans residues 712-744; it reads MTLWILKSKLSSLNSDVSTLQNTRMLTFKAIAQ. A helical transmembrane segment spans residues 745–765; sequence LFILGCTWCLGILQVGPAAHV. The Extracellular portion of the chain corresponds to 766–767; that stretch reads MA. Residues 768–788 traverse the membrane as a helical segment; it reads YLFTIINSLQGVFIFLVYCLL. Residues 789-830 lie on the Cytoplasmic side of the membrane; that stretch reads SQQVREEYGKWFKGIRKTRAESEKYTLSSRAMSDVNKPMMVN.

The protein belongs to the G-protein coupled receptor 2 family. Adhesion G-protein coupled receptor (ADGR) subfamily. As to quaternary structure, forms a heterodimer, consisting of a large extracellular region non-covalently linked to a seven-transmembrane moiety. Interacts with chondroitin sulfate; the interaction with chondroitin sulfate is calcium-dependent. Interacts with CD55. Post-translationally, autoproteolytically cleaved into 2 subunits, an extracellular alpha subunit and a seven-transmembrane beta subunit.

It is found in the cell membrane. The protein resides in the cell projection. The protein localises to the ruffle membrane. Its function is as follows. Cell surface receptor that binds to the chondroitin sulfate moiety of glycosaminoglycan chains and promotes cell attachment. Promotes granulocyte chemotaxis, degranulation and adhesion. In macrophages, promotes the release of inflammatory cytokines, including IL8 and TNF. Signals probably through G-proteins. This Canis lupus familiaris (Dog) protein is Adhesion G protein-coupled receptor E2 (ADGRE2).